The sequence spans 329 residues: Transcription factor TGA2.3 (329 aa).

The segment at 1–48 (MADMSPRTDTSTDDTDDNHMLEPGQLALAAASDSDRSKDKHEDQKTLR) is disordered. Residues 33–46 (DSDRSKDKHEDQKT) show a composition bias toward basic and acidic residues. A bZIP domain is found at 43-87 (DQKTLRRLAQNREAARKSRLRKKAYVQQLENSRLKLTQLEQELQR). The interval 45-65 (KTLRRLAQNREAARKSRLRKK) is basic motif. The interval 71-85 (LENSRLKLTQLEQEL) is leucine-zipper. The region spanning 110–326 (ALAFDMEYAR…RALSSLWLAR (217 aa)) is the DOG1 domain.

The protein belongs to the bZIP family. In terms of assembly, interacts with NPR1/NH1 and NPR3/NH3.

It localises to the nucleus. Its function is as follows. Transcriptional regulator involved in defense response. The polypeptide is Transcription factor TGA2.3 (Oryza sativa subsp. japonica (Rice)).